Reading from the N-terminus, the 274-residue chain is NH(3)-dependent NAD(+) synthetase (274 aa).

Position 46–53 (Gly-46–Ser-53) interacts with ATP. Asp-52 lines the Mg(2+) pocket. Arg-140 provides a ligand contact to deamido-NAD(+). An ATP-binding site is contributed by Thr-160. Glu-165 lines the Mg(2+) pocket. 2 residues coordinate deamido-NAD(+): Lys-173 and Asp-180. Residues Lys-189 and Thr-211 each contribute to the ATP site. Residue His-260–Lys-261 coordinates deamido-NAD(+).

The protein belongs to the NAD synthetase family. In terms of assembly, homodimer.

The catalysed reaction is deamido-NAD(+) + NH4(+) + ATP = AMP + diphosphate + NAD(+) + H(+). It functions in the pathway cofactor biosynthesis; NAD(+) biosynthesis; NAD(+) from deamido-NAD(+) (ammonia route): step 1/1. Its function is as follows. Catalyzes the ATP-dependent amidation of deamido-NAD to form NAD. Uses ammonia as a nitrogen source. The chain is NH(3)-dependent NAD(+) synthetase from Streptococcus equi subsp. zooepidemicus (strain H70).